A 181-amino-acid chain; its full sequence is Isopentenyl-diphosphate Delta-isomerase (181 aa).

Mn(2+) is bound by residues H25 and H32. The 135-residue stretch at 30–164 (PLHLAFSCWL…PWAFSPWMVM (135 aa)) folds into the Nudix hydrolase domain. C67 is an active-site residue. H69 lines the Mn(2+) pocket. E87 lines the Mg(2+) pocket. Positions 114 and 116 each coordinate Mn(2+). E116 is a catalytic residue.

The protein belongs to the IPP isomerase type 1 family. In terms of assembly, homodimer. Mg(2+) is required as a cofactor. The cofactor is Mn(2+).

Its subcellular location is the cytoplasm. It carries out the reaction isopentenyl diphosphate = dimethylallyl diphosphate. Its pathway is isoprenoid biosynthesis; dimethylallyl diphosphate biosynthesis; dimethylallyl diphosphate from isopentenyl diphosphate: step 1/1. In terms of biological role, catalyzes the 1,3-allylic rearrangement of the homoallylic substrate isopentenyl (IPP) to its highly electrophilic allylic isomer, dimethylallyl diphosphate (DMAPP). This Salmonella agona (strain SL483) protein is Isopentenyl-diphosphate Delta-isomerase.